The following is a 285-amino-acid chain: Foldase protein PrsA 2 (285 aa).

Residues 1 to 20 form the signal peptide; it reads MRGKHIFIITALISILMLSA. C21 carries the N-palmitoyl cysteine lipid modification. The S-diacylglycerol cysteine moiety is linked to residue C21. The region spanning 134 to 224 is the PpiC domain; the sequence is KPEIKASHIL…NGYHVIKLTD (91 aa).

This sequence belongs to the PrsA family.

The protein resides in the cell membrane. The catalysed reaction is [protein]-peptidylproline (omega=180) = [protein]-peptidylproline (omega=0). Functionally, plays a major role in protein secretion by helping the post-translocational extracellular folding of several secreted proteins. The sequence is that of Foldase protein PrsA 2 (prsA2) from Bacillus cereus (strain ATCC 14579 / DSM 31 / CCUG 7414 / JCM 2152 / NBRC 15305 / NCIMB 9373 / NCTC 2599 / NRRL B-3711).